Here is a 740-residue protein sequence, read N- to C-terminus: Eukaryotic translation initiation factor 3 subunit B (740 aa).

Over residues 1–10 (MAPSFDTLTE) the composition is skewed to polar residues. The tract at residues 1–22 (MAPSFDTLTEQDLHEEEEEEID) is disordered. A compositionally biased stretch (acidic residues) spans 13–22 (LHEEEEEEID). The RRM domain occupies 40–126 (TFVVIDGLPV…HTLAVNKLMD (87 aa)). 5 WD repeats span residues 193–230 (AHWT…KQKQ), 232–289 (PHPF…RSFV), 302–343 (EPKK…LLGK), 513–556 (IEKK…EKPE), and 571–609 (VEHY…HTFA). A disordered region spans residues 695 to 721 (DAYGVPEDVDSSKQAKDAPAVSEDQGE).

This sequence belongs to the eIF-3 subunit B family. Component of the eukaryotic translation initiation factor 3 (eIF-3) complex.

The protein localises to the cytoplasm. Its function is as follows. RNA-binding component of the eukaryotic translation initiation factor 3 (eIF-3) complex, which is involved in protein synthesis of a specialized repertoire of mRNAs and, together with other initiation factors, stimulates binding of mRNA and methionyl-tRNAi to the 40S ribosome. The eIF-3 complex specifically targets and initiates translation of a subset of mRNAs involved in cell proliferation. The protein is Eukaryotic translation initiation factor 3 subunit B (prt1) of Aspergillus niger (strain ATCC MYA-4892 / CBS 513.88 / FGSC A1513).